A 239-amino-acid polypeptide reads, in one-letter code: Probable transcriptional regulatory protein RBAM_007230 (239 aa).

Belongs to the TACO1 family. YeeN subfamily.

It is found in the cytoplasm. The protein is Probable transcriptional regulatory protein RBAM_007230 of Bacillus velezensis (strain DSM 23117 / BGSC 10A6 / LMG 26770 / FZB42) (Bacillus amyloliquefaciens subsp. plantarum).